The following is a 429-amino-acid chain: Enolase (429 aa).

A (2R)-2-phosphoglycerate-binding site is contributed by glutamine 162. Glutamate 204 functions as the Proton donor in the catalytic mechanism. Positions 241, 286, and 313 each coordinate Mg(2+). 4 residues coordinate (2R)-2-phosphoglycerate: lysine 338, arginine 367, serine 368, and lysine 389. Lysine 338 serves as the catalytic Proton acceptor.

Belongs to the enolase family. It depends on Mg(2+) as a cofactor.

The protein localises to the cytoplasm. Its subcellular location is the secreted. It localises to the cell surface. It catalyses the reaction (2R)-2-phosphoglycerate = phosphoenolpyruvate + H2O. The protein operates within carbohydrate degradation; glycolysis; pyruvate from D-glyceraldehyde 3-phosphate: step 4/5. Functionally, catalyzes the reversible conversion of 2-phosphoglycerate (2-PG) into phosphoenolpyruvate (PEP). It is essential for the degradation of carbohydrates via glycolysis. The protein is Enolase of Halalkalibacterium halodurans (strain ATCC BAA-125 / DSM 18197 / FERM 7344 / JCM 9153 / C-125) (Bacillus halodurans).